Here is a 314-residue protein sequence, read N- to C-terminus: Bifunctional riboflavin kinase/FMN adenylyltransferase (314 aa).

It belongs to the RibF family.

The catalysed reaction is riboflavin + ATP = FMN + ADP + H(+). It catalyses the reaction FMN + ATP + H(+) = FAD + diphosphate. Its pathway is cofactor biosynthesis; FAD biosynthesis; FAD from FMN: step 1/1. The protein operates within cofactor biosynthesis; FMN biosynthesis; FMN from riboflavin (ATP route): step 1/1. Functionally, catalyzes the phosphorylation of riboflavin to FMN followed by the adenylation of FMN to FAD. Can also catalyze the phosphorylation of the toxic riboflavin analogs 8-demethyl-8-aminoriboflavin (AF) to 8-demethyl-8-aminoriboflavin mononucleotide (AFMN) and roseoflavin (RoF) to roseoflavin mononucleotide (RoFMN), and the adenylation of AFMN to 8-demethyl-8-aminoriboflavin adenine dinucleotide (AFAD). The protein is Bifunctional riboflavin kinase/FMN adenylyltransferase of Listeria monocytogenes serovar 1/2a (strain ATCC BAA-679 / EGD-e).